Here is a 367-residue protein sequence, read N- to C-terminus: Terpene cyclase verU1 (367 aa).

The chain crosses the membrane as a helical span at residues 8–28 (IRCSLLLLGLVGIYTVWISSF). Asn50 is a glycosylation site (N-linked (GlcNAc...) asparagine). 8 consecutive transmembrane segments (helical) span residues 57 to 77 (FTGIDTLDKALGIFVVFYWPV), 85 to 105 (LSLIAFPAAVGVGEMWILFAL), 120 to 140 (MAMFGMGLMLVGPGIFLPIYC), 169 to 189 (CLLGGYYILVILLALPSPAVV), 197 to 217 (IIALLQGWPLLVSAMLWLTHL), 239 to 259 (ISAMACATISHLVPLLISLLA), 292 to 312 (FQWDYGLGSLALLLWAVGLHI), and 327 to 347 (LIPEALFLSVMMSPCGAAALY). N-linked (GlcNAc...) asparagine glycosylation occurs at Asn352.

It belongs to the membrane-bound ascI terpene cyclase family.

The protein localises to the membrane. The protein operates within secondary metabolite biosynthesis; terpenoid biosynthesis. It participates in mycotoxin biosynthesis. Functionally, terpene cyclase; part of the gene cluster that mediates the biosynthesis of the neurotoxin verrucosidin, a methylated alpha-pyrone polyketide that inhibits oxidative phosphorylation in mitochondria and thereby causes neurological diseases. The carbon backbone of verrucosidin is synthesized by the HR-PKS verA, and further modified by the other verrucodidin cluster enzymes. The sequence is that of Terpene cyclase verU1 from Penicillium polonicum.